The chain runs to 146 residues: Large ribosomal subunit protein uL15 (146 aa).

The tract at residues 1–58 is disordered; the sequence is MNLSELRPAPGARKKPTRKGQGIGSGLGKTAGKGHKGQNARSGGGVRPGFEGGQMPLQ. Composition is skewed to gly residues over residues 21–31 and 42–52; these read QGIGSGLGKTA and SGGGVRPGFEG.

It belongs to the universal ribosomal protein uL15 family. As to quaternary structure, part of the 50S ribosomal subunit.

In terms of biological role, binds to the 23S rRNA. The sequence is that of Large ribosomal subunit protein uL15 from Desulforamulus reducens (strain ATCC BAA-1160 / DSM 100696 / MI-1) (Desulfotomaculum reducens).